A 247-amino-acid chain; its full sequence is Ferredoxin:CoB-CoM heterodisulfide reductase subunit C (247 aa).

The 4Fe-4S ferredoxin-type domain occupies 32 to 62 (TPESLGLDRCIQCGACTASCPAARFTDYSPR). Residues cysteine 41, cysteine 44, cysteine 47, cysteine 51, cysteine 84, cysteine 87, cysteine 90, and cysteine 94 each contribute to the [4Fe-4S] cluster site. A compositionally biased stretch (basic and acidic residues) spans 216 to 240 (RTGTSCTEKKKNSGDLGFESDREYT). The disordered stretch occupies residues 216–247 (RTGTSCTEKKKNSGDLGFESDREYTGQEALTV).

It belongs to the HdrC family. As to quaternary structure, the ferredoxin:CoB-CoM heterodisulfide reductase is composed of three subunits; HdrA1, HdrB1 and HdrC1. The cofactor is [4Fe-4S] cluster.

It is found in the cytoplasm. It carries out the reaction coenzyme B + coenzyme M + 2 oxidized [2Fe-2S]-[ferredoxin] = coenzyme M-coenzyme B heterodisulfide + 2 reduced [2Fe-2S]-[ferredoxin] + 2 H(+). It functions in the pathway cofactor metabolism; coenzyme M-coenzyme B heterodisulfide reduction; coenzyme B and coenzyme M from coenzyme M-coenzyme B heterodisulfide: step 1/1. Its function is as follows. Part of a complex that catalyzes the reversible reduction of CoM-S-S-CoB to the thiol-coenzymes H-S-CoM (coenzyme M) and H-S-CoB (coenzyme B). Probably involved in methylotrophic methanogenesis but not in aceticlastic methanogenesis. This Methanosarcina acetivorans (strain ATCC 35395 / DSM 2834 / JCM 12185 / C2A) protein is Ferredoxin:CoB-CoM heterodisulfide reductase subunit C.